The chain runs to 217 residues: Small ribosomal subunit protein uS3 (217 aa).

Residues 40–110 (IRDVINKGFN…EVYINIHEVR (71 aa)) enclose the KH type-2 domain.

This sequence belongs to the universal ribosomal protein uS3 family. In terms of assembly, part of the 30S ribosomal subunit. Forms a tight complex with proteins S10 and S14.

Functionally, binds the lower part of the 30S subunit head. Binds mRNA in the 70S ribosome, positioning it for translation. This chain is Small ribosomal subunit protein uS3, found in Rickettsia massiliae (strain Mtu5).